A 674-amino-acid chain; its full sequence is Pre-mRNA-splicing factor cwf4 (674 aa).

16 HAT repeats span residues 50–82, 84–116, 118–150, 152–183, 185–216, 218–253, 255–289, 299–331, 333–367, 377–413, 415–446, 448–480, 482–516, 518–549, 567–608, and 610–643; these read EFQG…WELD, KEFA…CEMK, RNIN…MEEM, GNIT…MERR, HENE…FEEE, GNAA…FEIR, KEYE…FEKQ, TVLD…LEES, GDIN…IWLN, KDVD…FELR, RKID…FEDA, KQFD…LETK, GDSD…FEFE, MEYG…FEIA, TAVV…MHGT, and DTRK…YLFP.

Belongs to the crooked-neck family. In terms of assembly, belongs to the 40S cdc5-associated complex (or cwf complex), a spliceosome sub-complex reminiscent of a late-stage spliceosome composed of the U2, U5 and U6 snRNAs and at least brr2, cdc5, cwf2/prp3, cwf3/syf1, cwf4/syf3, cwf5/ecm2, spp42/cwf6, cwf7/spf27, cwf8, cwf9, cwf10, cwf11, cwf12, prp45/cwf13, cwf14, cwf15, cwf16, cwf17, cwf18, cwf19, cwf20, cwf21, cwf22, cwf23, cwf24, cwf25, cwf26, cyp7/cwf27, cwf28, cwf29/ist3, lea1, msl1, prp5/cwf1, prp10, prp12/sap130, prp17, prp22, sap61, sap62, sap114, sap145, slu7, smb1, smd1, smd3, smf1, smg1 and syf2.

It localises to the nucleus. Its function is as follows. Involved in pre-mRNA splicing and cell cycle progression. Required for the spliceosome assembly and initiation of the DNA replication. In Schizosaccharomyces pombe (strain 972 / ATCC 24843) (Fission yeast), this protein is Pre-mRNA-splicing factor cwf4 (cwf4).